We begin with the raw amino-acid sequence, 64 residues long: Movement protein TGBp3 (64 aa).

Residues methionine 1–aspartate 7 are Lumenal-facing. A helical transmembrane segment spans residues leucine 8 to serine 28. Over histidine 29 to histidine 64 the chain is Cytoplasmic.

This sequence belongs to the Tymovirales TGBp3 protein family.

It localises to the host endoplasmic reticulum membrane. Plays a role in viral cell-to-cell propagation, by facilitating genome transport to neighboring plant cells through plasmosdesmata. May induce the formation of granular vesicles derived from the Endoplasmic reticulum, which align on actin filaments. This is Movement protein TGBp3 from Chrysanthemum morifolium (Florist's daisy).